The following is an 858-amino-acid chain: Leucine--tRNA ligase (858 aa).

A 'HIGH' region motif is present at residues 53 to 63; it reads PYPSGNLHMGH. The 'KMSKS' region motif lies at 622–626; sequence KMSKS. Lysine 625 provides a ligand contact to ATP.

It belongs to the class-I aminoacyl-tRNA synthetase family.

Its subcellular location is the cytoplasm. The catalysed reaction is tRNA(Leu) + L-leucine + ATP = L-leucyl-tRNA(Leu) + AMP + diphosphate. The protein is Leucine--tRNA ligase of Prochlorococcus marinus subsp. pastoris (strain CCMP1986 / NIES-2087 / MED4).